A 965-amino-acid polypeptide reads, in one-letter code: MTISQNPALDTFEGLFNEAEFVYRHLGSNDAKQADLLSAIGYSDMATFINETVPEPVRLHKELDLPVAMSEHAALAKLRTMADDITVNKSYIGQGYSPVRMPAVIQRNVLENPGWYTAYTPYQAEIAQGRLEALLNFQQVCIDLTGLELAGASLLDEATAAAEAMAMSKRVSKSKSMQFFVDDRVYPQTLDVINTRAKYFGWEVVVGDFELAKSGDYFGALFQYVGVEGDVKDLTDVIAAVKKNKTYVSVVSDIMSLVLLKSPADMGADVALGSTQRFGIPMGFGGPHAAYFAFSDKAKRSAPGRIIGVSKDSQGNTALRMALQTREQHIRREKANSNICTSQVLLANLAGMYAVYHGPGGVKRIATRIHAFATAFADVIKNANDSNLNVLHDQFFDSVVVDCGSEKLASQIFQNADNVGYNLWRLGETKLSVAFSETSDQKDFNVLTQLFVTKAHDLPEDARVSLDSAHLRTDAILSHPVFNSHHTEHEMLRYLKSLEDKDLAMNRSMISLGSCTMKLNATSEMLPITWPEFANVHPFAPRDQVTGYVAMIDSLQEQLKAITGFDDVSMQPNSGASGEYAGLLAIRRYHESLGETDRDVCLIPMSAHGTNPATAMMMGMKVVVVKTDDNGNVDIDDLTAKSEEHSTRLGALMITYPSTHGVFEEGIRKICDLIHKHGGQVYMDGANMNAQVGMMQPADVGADVLHMNLHKTFCIPHGGGGPGMGPIGMKAHLAPFMANHTLSPVHNAQKDCSAVSAAPYGSASILPISWMYIAMMGRDGLLKATELALLNANYVAAELKDHYPVLYTGKNGRVAHECIIDIRPLKEETGISESDIAKRLMDYGFHSPTMSFPVAGTLMIEPTESESKEELDRFISALKSIKAEALKAKAGEDNWTLENNPLVNAPHTAAMVIDGEWTYPYSRETAAFPLPYIRTNKFWPSVARVDDAYGDKNLMCSCPSIENYM.

N6-(pyridoxal phosphate)lysine is present on Lys711.

It belongs to the GcvP family. In terms of assembly, the glycine cleavage system is composed of four proteins: P, T, L and H. The cofactor is pyridoxal 5'-phosphate.

The enzyme catalyses N(6)-[(R)-lipoyl]-L-lysyl-[glycine-cleavage complex H protein] + glycine + H(+) = N(6)-[(R)-S(8)-aminomethyldihydrolipoyl]-L-lysyl-[glycine-cleavage complex H protein] + CO2. Functionally, the glycine cleavage system catalyzes the degradation of glycine. The P protein binds the alpha-amino group of glycine through its pyridoxal phosphate cofactor; CO(2) is released and the remaining methylamine moiety is then transferred to the lipoamide cofactor of the H protein. This Psychrobacter cryohalolentis (strain ATCC BAA-1226 / DSM 17306 / VKM B-2378 / K5) protein is Glycine dehydrogenase (decarboxylating).